A 315-amino-acid chain; its full sequence is Lipoyl synthase (315 aa).

Positions 1-33 are disordered; the sequence is MADMPPVLRHPEKAHRPDQPQPKKPDWIRVKAP. Positions 9 to 29 are enriched in basic and acidic residues; that stretch reads RHPEKAHRPDQPQPKKPDWIR. Residues Cys54, Cys59, Cys65, Cys80, Cys84, Cys87, and Ser294 each coordinate [4Fe-4S] cluster. The Radical SAM core domain occupies 66–283; the sequence is WSQGHATMMI…EKAAYGKGFL (218 aa).

Belongs to the radical SAM superfamily. Lipoyl synthase family. The cofactor is [4Fe-4S] cluster.

Its subcellular location is the cytoplasm. The enzyme catalyses [[Fe-S] cluster scaffold protein carrying a second [4Fe-4S](2+) cluster] + N(6)-octanoyl-L-lysyl-[protein] + 2 oxidized [2Fe-2S]-[ferredoxin] + 2 S-adenosyl-L-methionine + 4 H(+) = [[Fe-S] cluster scaffold protein] + N(6)-[(R)-dihydrolipoyl]-L-lysyl-[protein] + 4 Fe(3+) + 2 hydrogen sulfide + 2 5'-deoxyadenosine + 2 L-methionine + 2 reduced [2Fe-2S]-[ferredoxin]. Its pathway is protein modification; protein lipoylation via endogenous pathway; protein N(6)-(lipoyl)lysine from octanoyl-[acyl-carrier-protein]: step 2/2. Catalyzes the radical-mediated insertion of two sulfur atoms into the C-6 and C-8 positions of the octanoyl moiety bound to the lipoyl domains of lipoate-dependent enzymes, thereby converting the octanoylated domains into lipoylated derivatives. The chain is Lipoyl synthase from Paracoccus denitrificans (strain Pd 1222).